Consider the following 591-residue polypeptide: Max-binding protein MNT (591 aa).

An N-acetylserine modification is found at Ser-2. Disordered regions lie at residues 17 to 122 and 182 to 223; these read AQQQ…APRQ and PGVQ…GIGT. Positions 22 to 44 are enriched in basic and acidic residues; that stretch reads RAREEQERLRLEREREREQEQKR. Composition is skewed to pro residues over residues 63-84 and 102-120; these read EAPP…PLAT and SLPP…PLAP. Residues 205–216 show a composition bias toward basic and acidic residues; the sequence is PAEEAKSSEQKK. A bHLH domain is found at 222 to 273; it reads GTREVHNKLEKNRRAHLKECFETLKRNIPNVDDKKTSNLSVLRTALRYIQSL. The interval 273 to 301 is leucine-zipper; that stretch reads LKRKEKEYEHEMERLAREKIATQQRLAEL. Residues 321 to 426 form a disordered region; it reads TGQPEDDQAS…PPPATPTQTL (106 aa). Acidic residues predominate over residues 336–346; the sequence is EGEDNVDEEME. Residues 374 to 383 are compositionally biased toward pro residues; sequence STAPAPLPTH. The span at 390–411 shows a compositional bias: low complexity; that stretch reads PVALSPAHLPVQQQQPPQQKTP. A compositionally biased stretch (pro residues) spans 412-421; it reads LPAPPPPPAT.

As to quaternary structure, efficient DNA binding requires dimerization with another bHLH protein. Binds DNA as a homodimer or a heterodimer with MAX.

It is found in the nucleus. In terms of biological role, binds DNA as a heterodimer with MAX and represses transcription. Binds to the canonical E box sequence 5'-CACGTG-3' and, with higher affinity, to 5'-CACGCG-3'. This Mus musculus (Mouse) protein is Max-binding protein MNT (Mnt).